Here is a 21-residue protein sequence, read N- to C-terminus: Cyanophlyctin (21 aa).

As to expression, expressed by the skin glands.

Its subcellular location is the secreted. Its function is as follows. Has antibacterial activity against E.coli HP101BA (MIC=6.4 uM), K.pneumoniae PTCC1388 (MIC=7.3 uM), M.luteus PTCC1625 (MIC=4.7 uM) and S.aureus PTCC1431 (MIC=5.3 uM). Has no or very limited (&lt;3%) hemolytic activity at concentrations of 15 ug/ml and 60 ug/ml, respectively. This is Cyanophlyctin from Euphlyctis cyanophlyctis (Skittering frog).